Reading from the N-terminus, the 394-residue chain is 1-deoxy-D-xylulose 5-phosphate reductoisomerase (394 aa).

Residues threonine 13, glycine 14, serine 15, valine 16, arginine 40, glutamine 41, and asparagine 127 each contribute to the NADPH site. Lysine 128 lines the 1-deoxy-D-xylulose 5-phosphate pocket. Position 129 (glutamate 129) interacts with NADPH. Residue aspartate 153 coordinates Mn(2+). Serine 154, glutamate 155, serine 184, and histidine 207 together coordinate 1-deoxy-D-xylulose 5-phosphate. Glutamate 155 contacts Mn(2+). Glycine 213 serves as a coordination point for NADPH. 1-deoxy-D-xylulose 5-phosphate is bound by residues serine 220, asparagine 225, lysine 226, and glutamate 229. Glutamate 229 provides a ligand contact to Mn(2+).

It belongs to the DXR family. The cofactor is Mg(2+). Mn(2+) serves as cofactor.

It carries out the reaction 2-C-methyl-D-erythritol 4-phosphate + NADP(+) = 1-deoxy-D-xylulose 5-phosphate + NADPH + H(+). Its pathway is isoprenoid biosynthesis; isopentenyl diphosphate biosynthesis via DXP pathway; isopentenyl diphosphate from 1-deoxy-D-xylulose 5-phosphate: step 1/6. Functionally, catalyzes the NADPH-dependent rearrangement and reduction of 1-deoxy-D-xylulose-5-phosphate (DXP) to 2-C-methyl-D-erythritol 4-phosphate (MEP). This is 1-deoxy-D-xylulose 5-phosphate reductoisomerase from Chromobacterium violaceum (strain ATCC 12472 / DSM 30191 / JCM 1249 / CCUG 213 / NBRC 12614 / NCIMB 9131 / NCTC 9757 / MK).